Consider the following 764-residue polypeptide: MASSSSSSSNSSTSSSALSGRLPGARSANPRKARILGLFDAIQDAVGPPKQAAADRRTVEKTWKLMDKVVRLCQNPKLQLKNSPPYILDILPDTYQHLRLILSKYDDNQKLAQLSENEYFKIYIDSLMKKSKRAIRLFKEGKERMYEEQSQERRNLTKLSLIFSHMLAEIKAIFPSGQFQGDTFRITKADAAEFWRKFFGERTIVPWKIFRQCLHEVQQISSGLEAMALKSTIDLTCNDYISVFEFDIFARLFQPWSSILRNWNFLAVTHPGYMAFLTYDEVKARLQKYSLKHGSYIFRLSCTRLGQWAIGYVTAGGNILQTIPHNKPLFQALIDGSREGFYLYPDGRSYNPDLTDLCEPTPHDHIKVTQEQYELYCEMGSTFQLCKICAENDKDVKIEPCGHLMCTSCLTSWQESDGQGCPFCRCEIKGTEPIIVDPFDPRDENRCCSFNDSLCTPMFDFDDDDLREECLIMNRLASLRKMNERQNSPVTSPGSSPLLQRRKTPPDPVQIPHLNLPPVPPRLDLIQRGLARSPCASPTGSPKSSPCMARKQDKPLPAPPPPLREPPPPPERPPPIPPDSRTCRHLHHAENVPCRDQSTPNEAWCTRDLSGGNQPSVCRVTHDGSPKLGVSSSVLNGRHSRVSTEAGFMRHKHHKRRESPLETHRVYNGLSGNEEYDVPPRLSPPPPTITIHPTVICPLLANSASDKVRNSAEEDDSEYKIPSSHPVSSRLPLHCHSIKHFPRLCENGQCLSNGAHNGISEIKN.

Residues 1–19 (MASSSSSSSNSSTSSSALS) show a composition bias toward low complexity. Residues 1-27 (MASSSSSSSNSSTSSSALSGRLPGARS) form a disordered region. A 4H region spans residues 48-180 (PPKQAAADRR…KAIFPSGQFQ (133 aa)). The 309-residue stretch at 48 to 356 (PPKQAAADRR…GRSYNPDLTD (309 aa)) folds into the Cbl-PTB domain. Residues 181 to 253 (GDTFRITKAD…FEFDIFARLF (73 aa)) are EF-hand-like. 5 residues coordinate Ca(2+): aspartate 234, threonine 236, asparagine 238, tyrosine 240, and glutamate 245. The segment at 254-356 (QPWSSILRNW…GRSYNPDLTD (103 aa)) is SH2-like. Arginine 299 contacts 4-O-phospho-L-tyrosine. The segment at 357–385 (LCEPTPHDHIKVTQEQYELYCEMGSTFQL) is linker. The segment at 386–425 (CKICAENDKDVKIEPCGHLMCTSCLTSWQESDGQGCPFCR) adopts an RING-type zinc-finger fold. 2 disordered regions span residues 482–583 (MNER…SRTC) and 707–726 (KVRN…SSHP). Residues 485–498 (RQNSPVTSPGSSPL) show a composition bias toward polar residues. Pro residues predominate over residues 556-578 (LPAPPPPLREPPPPPERPPPIPP).

Interacts with several SH3 domain-containing proteins and with poly-ubiquitinated proteins.

Its subcellular location is the cytoplasm. It catalyses the reaction S-ubiquitinyl-[E2 ubiquitin-conjugating enzyme]-L-cysteine + [acceptor protein]-L-lysine = [E2 ubiquitin-conjugating enzyme]-L-cysteine + N(6)-ubiquitinyl-[acceptor protein]-L-lysine.. It functions in the pathway protein modification; protein ubiquitination. In terms of biological role, E3 ubiquitin-protein ligase which accepts ubiquitin from specific E2 ubiquitin-conjugating enzymes, and transfers it to substrates, generally promoting their degradation by the proteasome. This Xenopus laevis (African clawed frog) protein is E3 ubiquitin-protein ligase CBL-B-B (cblb-b).